Reading from the N-terminus, the 557-residue chain is Urocanate hydratase (557 aa).

NAD(+) is bound by residues 53-54 (GG), glutamine 131, 177-179 (GMG), glutamate 197, arginine 202, 243-244 (NA), 264-268 (QTSAH), 274-275 (YL), and tyrosine 323. Residue cysteine 411 is part of the active site. Residue glycine 493 participates in NAD(+) binding.

It belongs to the urocanase family. It depends on NAD(+) as a cofactor.

It localises to the cytoplasm. It carries out the reaction 4-imidazolone-5-propanoate = trans-urocanate + H2O. It participates in amino-acid degradation; L-histidine degradation into L-glutamate; N-formimidoyl-L-glutamate from L-histidine: step 2/3. In terms of biological role, catalyzes the conversion of urocanate to 4-imidazolone-5-propionate. The polypeptide is Urocanate hydratase (Pseudomonas putida (strain GB-1)).